Here is a 573-residue protein sequence, read N- to C-terminus: uncharacterized protein (573 aa).

The region spanning 15-298 (AGIALILMLT…FPFLIMIFTR (284 aa)) is the ABC transmembrane type-1 domain. 6 consecutive transmembrane segments (helical) span residues 17 to 37 (IALI…LLIA), 52 to 72 (VWIW…AGML), 127 to 147 (IFMS…GIVL), 153 to 173 (VKLG…LLWV), 238 to 258 (FTMP…LWAG), and 275 to 295 (IINY…LIMI). The ABC transporter domain maps to 330-563 (IEFQHVSFRY…SQLYKRIYES (234 aa)). Residue 364 to 371 (GATGSGKS) coordinates ATP.

This sequence belongs to the ABC transporter superfamily.

It localises to the cell membrane. This is an uncharacterized protein from Bacillus subtilis (strain 168).